Here is a 428-residue protein sequence, read N- to C-terminus: Ribosomal RNA small subunit methyltransferase B (428 aa).

S-adenosyl-L-methionine contacts are provided by residues 253-259 (CAAPGGK), D276, D302, and D321. C374 (nucleophile) is an active-site residue.

Belongs to the class I-like SAM-binding methyltransferase superfamily. RsmB/NOP family.

The protein resides in the cytoplasm. It carries out the reaction cytidine(967) in 16S rRNA + S-adenosyl-L-methionine = 5-methylcytidine(967) in 16S rRNA + S-adenosyl-L-homocysteine + H(+). Functionally, specifically methylates the cytosine at position 967 (m5C967) of 16S rRNA. This chain is Ribosomal RNA small subunit methyltransferase B, found in Citrobacter koseri (strain ATCC BAA-895 / CDC 4225-83 / SGSC4696).